Reading from the N-terminus, the 434-residue chain is NFATC2-interacting protein (434 aa).

Disordered regions lie at residues Met-1 to Leu-63 and Gly-176 to Asn-237. Positions Gly-28–Cys-59 are enriched in pro residues. Residues Pro-228–Asn-237 show a composition bias toward basic residues. Residues Pro-275 to Asp-351 enclose the Ubiquitin-like domain.

Its subcellular location is the nucleus. It is found in the cytoplasm. Regulates the magnitude of NFAT-driven transcription of a specific subset of cytokine genes. The polypeptide is NFATC2-interacting protein (nfatc2ip) (Xenopus tropicalis (Western clawed frog)).